Consider the following 122-residue polypeptide: Large ribosomal subunit protein uL14 (122 aa).

Belongs to the universal ribosomal protein uL14 family. Part of the 50S ribosomal subunit. Forms a cluster with proteins L3 and L19. In the 70S ribosome, L14 and L19 interact and together make contacts with the 16S rRNA in bridges B5 and B8.

In terms of biological role, binds to 23S rRNA. Forms part of two intersubunit bridges in the 70S ribosome. This is Large ribosomal subunit protein uL14 from Erythrobacter litoralis (strain HTCC2594).